A 459-amino-acid chain; its full sequence is Pentatricopeptide repeat-containing protein At5g18390, mitochondrial (459 aa).

The transit peptide at 1–7 directs the protein to the mitochondrion; the sequence is MLLLRRY. PPR repeat units lie at residues 110–144, 145–175, 181–215, 216–250, 251–285, 286–320, 321–355, 356–390, and 391–425; these read TSMEYEELAKSLASHKKYESMWKILKQMKDLSLDI, SGETLCFIIEQYGKNGHVDQAVELFNGVPKT, TVDVYNSLLHALCDVKMFHGAYALIRRMIRKGLKP, DKRTYAILVNGWCSAGKMKEAQEFLDEMSRRGFNP, PARGRDLLIEGLLNAGYLESAKEMVSKMTKGGFVP, DIQTFNILIEAISKSGEVEFCIEMYYTACKLGLCV, DIDTYKTLIPAVSKIGKIDEAFRLLNNCVEDGHKP, FPSLYAPIIKGMCRNGMFDDAFSFFSDMKVKAHPP, and NRPVYTMLITMCGRGGKFVDAANYLVEMTEMGLVP.

This sequence belongs to the PPR family. P subfamily.

Its subcellular location is the mitochondrion. The protein is Pentatricopeptide repeat-containing protein At5g18390, mitochondrial of Arabidopsis thaliana (Mouse-ear cress).